The chain runs to 163 residues: Phosphopantetheine adenylyltransferase (163 aa).

Residue T10 participates in substrate binding. Residues 10 to 11 (TF) and H18 contribute to the ATP site. Residues K42, L74, and R88 each contribute to the substrate site. ATP contacts are provided by residues 89 to 91 (GLR), E99, and 124 to 130 (NSFISST).

This sequence belongs to the bacterial CoaD family. Homohexamer. Mg(2+) is required as a cofactor.

Its subcellular location is the cytoplasm. The catalysed reaction is (R)-4'-phosphopantetheine + ATP + H(+) = 3'-dephospho-CoA + diphosphate. It functions in the pathway cofactor biosynthesis; coenzyme A biosynthesis; CoA from (R)-pantothenate: step 4/5. Reversibly transfers an adenylyl group from ATP to 4'-phosphopantetheine, yielding dephospho-CoA (dPCoA) and pyrophosphate. The sequence is that of Phosphopantetheine adenylyltransferase from Shewanella baltica (strain OS223).